The following is a 206-amino-acid chain: Small ribosomal subunit protein uS4 (206 aa).

The S4 RNA-binding domain occupies 96–156 (SRLDNVVYRM…EKSKNQLRIQ (61 aa)).

The protein belongs to the universal ribosomal protein uS4 family. Part of the 30S ribosomal subunit. Contacts protein S5. The interaction surface between S4 and S5 is involved in control of translational fidelity.

Its function is as follows. One of the primary rRNA binding proteins, it binds directly to 16S rRNA where it nucleates assembly of the body of the 30S subunit. In terms of biological role, with S5 and S12 plays an important role in translational accuracy. The protein is Small ribosomal subunit protein uS4 of Teredinibacter turnerae (strain ATCC 39867 / T7901).